A 1113-amino-acid chain; its full sequence is Carbamoyl phosphate synthase arginine-specific large chain (1113 aa).

Residues 23 to 420 (QLIKGIDSVL…AFQKAFRQVD (398 aa)) form a carboxyphosphate synthetic domain region. The ATP site is built by Arg-150, Arg-190, Gly-196, Gly-197, Lys-227, Leu-229, Glu-234, Gly-260, Ile-261, His-262, Gln-303, and Glu-317. Residues 154 to 346 (ARALKEINMP…LAYTAAKIAL (193 aa)) form the ATP-grasp 1 domain. Gln-303, Glu-317, and Asn-319 together coordinate Mg(2+). Residues Gln-303, Glu-317, and Asn-319 each coordinate Mn(2+). The segment at 421–568 (PSLLGFQGSD…YVTYNAVKDD (148 aa)) is oligomerization domain. The tract at residues 569 to 955 (VTFGDNGIMV…SYWVALQGLM (387 aa)) is carbamoyl phosphate synthetic domain. The region spanning 693–888 (STILDTLGLD…FVEIAVKAFL (196 aa)) is the ATP-grasp 2 domain. 10 residues coordinate ATP: Arg-729, Lys-768, Ile-770, Glu-775, Gly-800, Val-801, His-802, Ser-803, Gln-843, and Glu-859. Residues Gln-843, Glu-859, and Asn-861 each coordinate Mg(2+). The Mn(2+) site is built by Gln-843, Glu-859, and Asn-861. The allosteric domain stretch occupies residues 956–1097 (SFCVPLPPSG…EMRQSDGPET (142 aa)). One can recognise an MGS-like domain in the interval 957–1113 (FCVPLPPSGI…WREYLGFKPT (157 aa)).

The protein belongs to the CarB family. Heterodimer composed of 2 chains; the small (or glutamine) chain promotes the hydrolysis of glutamine to ammonia, which is used by the large (or ammonia) chain to synthesize carbamoyl phosphate. Mg(2+) serves as cofactor. It depends on Mn(2+) as a cofactor.

The protein localises to the cytoplasm. It catalyses the reaction hydrogencarbonate + L-glutamine + 2 ATP + H2O = carbamoyl phosphate + L-glutamate + 2 ADP + phosphate + 2 H(+). The catalysed reaction is hydrogencarbonate + NH4(+) + 2 ATP = carbamoyl phosphate + 2 ADP + phosphate + 2 H(+). It functions in the pathway amino-acid biosynthesis; L-arginine biosynthesis; carbamoyl phosphate from bicarbonate: step 1/1. Large subunit of the arginine-specific carbamoyl phosphate synthase (CPSase). CPSase catalyzes the formation of carbamoyl phosphate from the ammonia moiety of glutamine, hydrogencarbonate, and phosphate donated by ATP, constituting the first step of 2 biosynthetic pathways, one leading to arginine and/or urea and the other to pyrimidine nucleotides. The large subunit (synthetase) binds the substrates ammonia (free or transferred from glutamine from the small subunit), hydrogencarbonate and ATP and carries out an ATP-coupled ligase reaction, activating hydrogencarbonate by forming carboxy phosphate which reacts with ammonia to form carbamoyl phosphate. The protein is Carbamoyl phosphate synthase arginine-specific large chain (CPA2) of Eremothecium gossypii (strain ATCC 10895 / CBS 109.51 / FGSC 9923 / NRRL Y-1056) (Yeast).